We begin with the raw amino-acid sequence, 159 residues long: Large ribosomal subunit protein uL11 (159 aa).

The disordered stretch occupies residues 1 to 26 (MAGTIEVLVPGGKANPGPPLGPELGP).

It belongs to the universal ribosomal protein uL11 family. In terms of assembly, part of the ribosomal stalk of the 50S ribosomal subunit. Interacts with L10 and the large rRNA to form the base of the stalk. L10 forms an elongated spine to which L12 dimers bind in a sequential fashion forming a multimeric L10(L12)X complex.

Forms part of the ribosomal stalk which helps the ribosome interact with GTP-bound translation factors. The sequence is that of Large ribosomal subunit protein uL11 from Haloferax volcanii (strain ATCC 29605 / DSM 3757 / JCM 8879 / NBRC 14742 / NCIMB 2012 / VKM B-1768 / DS2) (Halobacterium volcanii).